A 422-amino-acid chain; its full sequence is 4-hydroxy-3-methylbut-2-en-1-yl diphosphate synthase (flavodoxin) (422 aa).

4 residues coordinate [4Fe-4S] cluster: Cys-316, Cys-319, Cys-362, and Glu-369.

This sequence belongs to the IspG family. Requires [4Fe-4S] cluster as cofactor.

It catalyses the reaction (2E)-4-hydroxy-3-methylbut-2-enyl diphosphate + oxidized [flavodoxin] + H2O + 2 H(+) = 2-C-methyl-D-erythritol 2,4-cyclic diphosphate + reduced [flavodoxin]. The protein operates within isoprenoid biosynthesis; isopentenyl diphosphate biosynthesis via DXP pathway; isopentenyl diphosphate from 1-deoxy-D-xylulose 5-phosphate: step 5/6. Functionally, converts 2C-methyl-D-erythritol 2,4-cyclodiphosphate (ME-2,4cPP) into 1-hydroxy-2-methyl-2-(E)-butenyl 4-diphosphate. The chain is 4-hydroxy-3-methylbut-2-en-1-yl diphosphate synthase (flavodoxin) from Ehrlichia ruminantium (strain Gardel).